A 120-amino-acid polypeptide reads, in one-letter code: Large ribosomal subunit protein uL29A (120 aa).

Residues Ser-13 and Ser-50 each carry the phosphoserine modification.

Belongs to the universal ribosomal protein uL29 family. Component of the large ribosomal subunit (LSU). Mature yeast ribosomes consist of a small (40S) and a large (60S) subunit. The 40S small subunit contains 1 molecule of ribosomal RNA (18S rRNA) and 33 different proteins (encoded by 57 genes). The large 60S subunit contains 3 rRNA molecules (25S, 5.8S and 5S rRNA) and 46 different proteins (encoded by 81 genes). uL29 is associated with the polypeptide exit tunnel.

The protein localises to the cytoplasm. Its function is as follows. Component of the ribosome, a large ribonucleoprotein complex responsible for the synthesis of proteins in the cell. The small ribosomal subunit (SSU) binds messenger RNAs (mRNAs) and translates the encoded message by selecting cognate aminoacyl-transfer RNA (tRNA) molecules. The large subunit (LSU) contains the ribosomal catalytic site termed the peptidyl transferase center (PTC), which catalyzes the formation of peptide bonds, thereby polymerizing the amino acids delivered by tRNAs into a polypeptide chain. The nascent polypeptides leave the ribosome through a tunnel in the LSU and interact with protein factors that function in enzymatic processing, targeting, and the membrane insertion of nascent chains at the exit of the ribosomal tunnel. The protein is Large ribosomal subunit protein uL29A of Saccharomyces cerevisiae (strain ATCC 204508 / S288c) (Baker's yeast).